Consider the following 272-residue polypeptide: uncharacterized protein (272 aa).

Helical transmembrane passes span 20–37 (VYLSVFIVLALYCVNLLI), 57–77 (HPLTYTIIPTYLVVLTAHFSL), 97–119 (LNVSCIAIVTTGYSVLIAFIMLM), 155–177 (SIATLLLLWLLLFLLGLLFYVIF), 184–203 (LVSLLFVFLLNIMNAAVTLG), and 234–256 (PYSIFVYWIMLIAVIYLIGWLVI).

The protein localises to the cell membrane. This is an uncharacterized protein from Halalkalibacterium halodurans (strain ATCC BAA-125 / DSM 18197 / FERM 7344 / JCM 9153 / C-125) (Bacillus halodurans).